Here is a 155-residue protein sequence, read N- to C-terminus: Ribosomal RNA large subunit methyltransferase H (155 aa).

S-adenosyl-L-methionine contacts are provided by residues L72, G103, and 122-127 (LSDLTL).

Belongs to the RNA methyltransferase RlmH family. Homodimer.

Its subcellular location is the cytoplasm. The enzyme catalyses pseudouridine(1915) in 23S rRNA + S-adenosyl-L-methionine = N(3)-methylpseudouridine(1915) in 23S rRNA + S-adenosyl-L-homocysteine + H(+). In terms of biological role, specifically methylates the pseudouridine at position 1915 (m3Psi1915) in 23S rRNA. This is Ribosomal RNA large subunit methyltransferase H from Delftia acidovorans (strain DSM 14801 / SPH-1).